The primary structure comprises 443 residues: 3-phosphoshikimate 1-carboxyvinyltransferase (443 aa).

The segment at 1–25 (MSHSAEPLPMTARRSGPLTGEAQVP) is disordered. The 3-phosphoshikimate site is built by lysine 28, serine 29, and arginine 33. Residue lysine 28 coordinates phosphoenolpyruvate. The phosphoenolpyruvate site is built by glycine 101 and arginine 129. Positions 174, 176, 326, and 353 each coordinate 3-phosphoshikimate. Glutamine 176 provides a ligand contact to phosphoenolpyruvate. Aspartate 326 (proton acceptor) is an active-site residue. Residues arginine 357 and arginine 400 each coordinate phosphoenolpyruvate.

The protein belongs to the EPSP synthase family. Monomer.

The protein localises to the cytoplasm. It catalyses the reaction 3-phosphoshikimate + phosphoenolpyruvate = 5-O-(1-carboxyvinyl)-3-phosphoshikimate + phosphate. The protein operates within metabolic intermediate biosynthesis; chorismate biosynthesis; chorismate from D-erythrose 4-phosphate and phosphoenolpyruvate: step 6/7. Catalyzes the transfer of the enolpyruvyl moiety of phosphoenolpyruvate (PEP) to the 5-hydroxyl of shikimate-3-phosphate (S3P) to produce enolpyruvyl shikimate-3-phosphate and inorganic phosphate. This chain is 3-phosphoshikimate 1-carboxyvinyltransferase, found in Paracoccus denitrificans (strain Pd 1222).